We begin with the raw amino-acid sequence, 245 residues long: MEAVWESARILANSRFAVAFTGAGISAESGIPTFRGKDGLWSRFDPRDLATPEAFNRDPRLVWEWYSWRIERVLAAKPNKAHRLLARLEDSGVLKAVITQNVDGLHRRAGSRRVLELHGNVLRARCTRCGSKLEWREKPSNLPPSCPRCGGVLRPDVVWFGEPLDTSLLEEAFGLARRSDVMIIIGTSGAVDPAGLLPLAAKESGATLINVNPEPNRYSGVADIELRMRAVEFAERLSRAMGIDI.

The Deacetylase sirtuin-type domain occupies 1–245 (MEAVWESARI…RLSRAMGIDI (245 aa)). 22–41 (GAGISAESGIPTFRGKDGLW) is an NAD(+) binding site. Residues Tyr-66 and Arg-69 each contribute to the substrate site. An NAD(+)-binding site is contributed by 100–103 (QNVD). Catalysis depends on His-118, which acts as the Proton acceptor. 4 residues coordinate Zn(2+): Cys-126, Cys-129, Cys-146, and Cys-149. Residues 186–188 (GTS), 212–214 (NPE), and Met-241 each bind NAD(+).

It belongs to the sirtuin family. Class III subfamily. It depends on Zn(2+) as a cofactor.

Its subcellular location is the cytoplasm. The enzyme catalyses N(6)-acetyl-L-lysyl-[protein] + NAD(+) + H2O = 2''-O-acetyl-ADP-D-ribose + nicotinamide + L-lysyl-[protein]. It catalyses the reaction N(6)-succinyl-L-lysyl-[protein] + NAD(+) + H2O = 2''-O-succinyl-ADP-D-ribose + nicotinamide + L-lysyl-[protein]. In terms of biological role, NAD-dependent lysine deacetylase and desuccinylase that specifically removes acetyl and succinyl groups on target proteins. Modulates the activities of several proteins which are inactive in their acylated form. Deacetylates the N-terminal lysine residue of Alba, the major archaeal chromatin protein and that, in turn, increases Alba's DNA binding affinity, thereby repressing transcription. The polypeptide is NAD-dependent protein deacylase (Aeropyrum pernix (strain ATCC 700893 / DSM 11879 / JCM 9820 / NBRC 100138 / K1)).